Here is an 82-residue protein sequence, read N- to C-terminus: U1-theraphotoxin-Ct1b (82 aa).

Positions 1 to 23 (MRTFTLIAILTCALLVIYHAAEA) are cleaved as a signal peptide. Residues 24 to 44 (EELEAKDVIESKALATLDEER) constitute a propeptide that is removed on maturation.

The protein belongs to the neurotoxin 12 (Hwtx-2) family. 03 (juruin) subfamily. Contains 3 disulfide bonds. Two different connectivities are observed in similar proteins (C1-C3, C2-C5, C4-C6 or C1-C4, C2-C5, C3-C6). In terms of tissue distribution, expressed by the venom gland.

It is found in the secreted. Functionally, this toxin causes paralysis and death to sheep blowflies. It does not target insect sodium channels. The protein is U1-theraphotoxin-Ct1b of Coremiocnemis tropix (Australian tarantula spider).